We begin with the raw amino-acid sequence, 443 residues long: Tol-Pal system protein TolB (443 aa).

Residues 1–33 form the signal peptide; the sequence is MKIGIINTKIRTVFSAFACMIAASLVCTMPARA.

Belongs to the TolB family. In terms of assembly, the Tol-Pal system is composed of five core proteins: the inner membrane proteins TolA, TolQ and TolR, the periplasmic protein TolB and the outer membrane protein Pal. They form a network linking the inner and outer membranes and the peptidoglycan layer.

It is found in the periplasm. Functionally, part of the Tol-Pal system, which plays a role in outer membrane invagination during cell division and is important for maintaining outer membrane integrity. This chain is Tol-Pal system protein TolB, found in Brucella melitensis biotype 1 (strain ATCC 23456 / CCUG 17765 / NCTC 10094 / 16M).